A 195-amino-acid chain; its full sequence is 2-cysteine peroxiredoxin, chloroplastic (195 aa).

A Thioredoxin domain is found at 3 to 161 (IRVGQKAPDF…ALRTLQAIQY (159 aa)). C49 (cysteine sulfenic acid (-SOH) intermediate) is an active-site residue.

Belongs to the peroxiredoxin family. AhpC/Prx1 subfamily. In terms of assembly, homodimer; disulfide-linked, upon oxidation.

The protein localises to the plastid. Its subcellular location is the chloroplast. It catalyses the reaction a hydroperoxide + [thioredoxin]-dithiol = an alcohol + [thioredoxin]-disulfide + H2O. Thiol-specific peroxidase that catalyzes the reduction of hydrogen peroxide and organic hydroperoxides to water and alcohols, respectively. Plays a role in cell protection against oxidative stress by detoxifying peroxides. The sequence is that of 2-cysteine peroxiredoxin, chloroplastic from Chattonella marina var. antiqua (Red tide flagellate).